The primary structure comprises 173 residues: Ribosome maturation factor RimM (173 aa).

In terms of domain architecture, PRC barrel spans 102–173 (EGEYYWSDLI…TMLVDWDPEF (72 aa)).

It belongs to the RimM family. Binds ribosomal protein uS19.

The protein resides in the cytoplasm. Its function is as follows. An accessory protein needed during the final step in the assembly of 30S ribosomal subunit, possibly for assembly of the head region. Essential for efficient processing of 16S rRNA. May be needed both before and after RbfA during the maturation of 16S rRNA. It has affinity for free ribosomal 30S subunits but not for 70S ribosomes. This Methylobacillus flagellatus (strain ATCC 51484 / DSM 6875 / VKM B-1610 / KT) protein is Ribosome maturation factor RimM.